We begin with the raw amino-acid sequence, 168 residues long: Desumoylating isopeptidase 1 (168 aa).

The PPPDE domain maps to 7-149 (YPVKLYVYDL…FGQALRPLLD (143 aa)). His-38 is a catalytic residue. The short motif at 83-91 (IFLEYLSSL) is the Nuclear export signal 1 element. Cys-108 is a catalytic residue. A Nuclear export signal 2 motif is present at residues 139–153 (PFGQALRPLLDSIQI).

It belongs to the DeSI family. Homodimer. Interacts with UBQLN4; leading to the export of UBQLN4 from the nucleus.

The protein resides in the cytoplasm. The protein localises to the nucleus. It carries out the reaction S-hexadecanoyl-L-cysteinyl-[protein] + H2O = L-cysteinyl-[protein] + hexadecanoate + H(+). Its activity is regulated as follows. Palmostatin B inhibits its palmitoyl protein thioesterase activity. Protease which deconjugates SUMO1, SUMO2 and SUMO3 from some substrate proteins. Has isopeptidase but not SUMO-processing activity. Desumoylates ZBTB46. Collaborates with UBQLN4 in the export of ubiquitinated proteins from the nucleus to the cytoplasm. Exhibits palmitoyl protein thioesterase (S-depalmitoylation) activity towards synthetic substrates 4-methylumbelliferyl-6-S-palmitoyl-beta-D-glucopyranoside and S-depalmitoylation probe 5 (DPP-5). This is Desumoylating isopeptidase 1 from Homo sapiens (Human).